Here is a 448-residue protein sequence, read N- to C-terminus: Probable glycine dehydrogenase (decarboxylating) subunit 1 (448 aa).

This sequence belongs to the GcvP family. N-terminal subunit subfamily. In terms of assembly, the glycine cleavage system is composed of four proteins: P, T, L and H. In this organism, the P 'protein' is a heterodimer of two subunits.

The catalysed reaction is N(6)-[(R)-lipoyl]-L-lysyl-[glycine-cleavage complex H protein] + glycine + H(+) = N(6)-[(R)-S(8)-aminomethyldihydrolipoyl]-L-lysyl-[glycine-cleavage complex H protein] + CO2. The glycine cleavage system catalyzes the degradation of glycine. The P protein binds the alpha-amino group of glycine through its pyridoxal phosphate cofactor; CO(2) is released and the remaining methylamine moiety is then transferred to the lipoamide cofactor of the H protein. This is Probable glycine dehydrogenase (decarboxylating) subunit 1 from Shouchella clausii (strain KSM-K16) (Alkalihalobacillus clausii).